The chain runs to 497 residues: Aldehyde dehydrogenase (497 aa).

An NAD(+)-binding site is contributed by 241–246 (GSTVVG). Glu264 acts as the Proton acceptor in catalysis. Cys298 serves as the catalytic Nucleophile.

This sequence belongs to the aldehyde dehydrogenase family.

It is found in the cytoplasm. It carries out the reaction an aldehyde + NAD(+) + H2O = a carboxylate + NADH + 2 H(+). It participates in alcohol metabolism; ethanol degradation; acetate from ethanol: step 2/2. The protein is Aldehyde dehydrogenase (ALTA10) of Alternaria alternata (Alternaria rot fungus).